The following is a 217-amino-acid chain: Pyridoxine/pyridoxamine 5'-phosphate oxidase (217 aa).

Substrate is bound by residues 13 to 16 (RREY) and Lys-71. Residues 66-71 (RTVLLK), 81-82 (YT), Arg-87, Lys-88, and Gln-110 contribute to the FMN site. The substrate site is built by Tyr-128, Arg-132, and Ser-136. Residues 145–146 (QS) and Trp-190 each bind FMN. 196–198 (RLH) is a binding site for substrate. Arg-200 provides a ligand contact to FMN.

Belongs to the pyridoxamine 5'-phosphate oxidase family. Homodimer. The cofactor is FMN.

The catalysed reaction is pyridoxamine 5'-phosphate + O2 + H2O = pyridoxal 5'-phosphate + H2O2 + NH4(+). The enzyme catalyses pyridoxine 5'-phosphate + O2 = pyridoxal 5'-phosphate + H2O2. Its pathway is cofactor metabolism; pyridoxal 5'-phosphate salvage; pyridoxal 5'-phosphate from pyridoxamine 5'-phosphate: step 1/1. It functions in the pathway cofactor metabolism; pyridoxal 5'-phosphate salvage; pyridoxal 5'-phosphate from pyridoxine 5'-phosphate: step 1/1. Catalyzes the oxidation of either pyridoxine 5'-phosphate (PNP) or pyridoxamine 5'-phosphate (PMP) into pyridoxal 5'-phosphate (PLP). The chain is Pyridoxine/pyridoxamine 5'-phosphate oxidase from Rubrobacter xylanophilus (strain DSM 9941 / JCM 11954 / NBRC 16129 / PRD-1).